The sequence spans 300 residues: Acetylglutamate kinase (300 aa).

Substrate contacts are provided by residues Gly68–Gly69, Arg90, and Asn194.

Belongs to the acetylglutamate kinase family. ArgB subfamily.

The protein resides in the cytoplasm. The enzyme catalyses N-acetyl-L-glutamate + ATP = N-acetyl-L-glutamyl 5-phosphate + ADP. It participates in amino-acid biosynthesis; L-arginine biosynthesis; N(2)-acetyl-L-ornithine from L-glutamate: step 2/4. Functionally, catalyzes the ATP-dependent phosphorylation of N-acetyl-L-glutamate. This Methanocella arvoryzae (strain DSM 22066 / NBRC 105507 / MRE50) protein is Acetylglutamate kinase.